An 804-amino-acid chain; its full sequence is Protein-lysine N-methyltransferase SMYD4 (804 aa).

S-adenosyl-L-methionine is bound at residue 112–114 (RSA). Positions 233–574 (SSIGLCVDPL…KGQEILHCYG (342 aa)) constitute an SET domain. Zn(2+) contacts are provided by Cys296, Cys299, Cys309, Cys312, Cys318, Cys322, His331, and Cys335. The MYND-type zinc finger occupies 296-335 (CHRCLKHTLATVPCDGCSYAKYCSQECLQQAWELYHRTEC). S-adenosyl-L-methionine-binding positions include Asn427, 539–540 (NH), Tyr573, and Phe595.

It belongs to the class V-like SAM-binding methyltransferase superfamily. In terms of assembly, interacts (via MYND-type zinc finger) with HDAC1.

The protein resides in the nucleus. The protein localises to the cytoplasm. It catalyses the reaction L-lysyl-[protein] + S-adenosyl-L-methionine = N(6)-methyl-L-lysyl-[protein] + S-adenosyl-L-homocysteine + H(+). Its function is as follows. Protein-lysine N-methyltransferase. Monomethylates PRMT5, modulating its transcriptional activity. May also act as a histone methyltransferase. Plays a critical role in cardiac development. Acts as a key epigenetic regulator of gene expression during cardiac development via its dual activities as a methyltransferase and negative regulator of HDAC1. The polypeptide is Protein-lysine N-methyltransferase SMYD4 (Homo sapiens (Human)).